We begin with the raw amino-acid sequence, 660 residues long: MAGIESVLQETRVFNPPESFVKQANIAGMDAYRALCAEAEHDYEGFWARLAHEHLLWHKPFSKVLDESNAPFYKWFEDGELNASYNCLERNLENGNADKVAIIFETDDGKVSRTTYRELHARVCRFANGLKALGIKKGDRVVIYMPMSVEGIVAMQACARIGATHSVVFGGFSAKSLQERIVDVGAVALITADEQMRGGKALPLKAIADEALAMEGTDAVKHVIVYRRTNGNVNWVEGRDRAMDEVEAGQPDTCEVTPVSAEHPLFILYTSGSTGKPKGVQHSTGGYLLWALLTMQWTFDLKPDDIFWCTADIGWVTGHSYIAYGPLAAGATQVVFEGVPTYPNAGRFWDMIQRHKVNTFYTAPTAIRSLIKAAEADEKVHPKQYDLSSLRLLGTVGEPINPEAWMWYHTNIGGGRCPIVDTFWQTETGGHMMTPLPGATPLVPGSCTLPLPGIMAAVVDETGHDVPNGQGGILVVKRPWPSMIRTIWGDPERFKKSYFPEELGGKLYLAGDGSIRDKDTGYFTIMGRIDDVLNVSGHRMGTMEIESALVANPIVAEAAVVGRPDDMTGEAICAFVVLKRSRPDGDEAKQIANELRNWVGKEIGPIAKPKDIRFGDNLPKTRSGKIMRRLLRSLAKGEDITQDTSTLENPAILDQLKETR.

CoA contacts are provided by residues 197-200 (RGGK) and T317. ATP-binding positions include 397–399 (GEP), 421–426 (DTFWQT), D512, and R528. S536 contacts CoA. R539 provides a ligand contact to ATP. Positions 550 and 555 each coordinate Mg(2+). At K625 the chain carries N6-acetyllysine.

Belongs to the ATP-dependent AMP-binding enzyme family. Requires Mg(2+) as cofactor. Post-translationally, acetylated. Deacetylation by the SIR2-homolog deacetylase activates the enzyme.

The enzyme catalyses acetate + ATP + CoA = acetyl-CoA + AMP + diphosphate. In terms of biological role, catalyzes the conversion of acetate into acetyl-CoA (AcCoA), an essential intermediate at the junction of anabolic and catabolic pathways. AcsA undergoes a two-step reaction. In the first half reaction, AcsA combines acetate with ATP to form acetyl-adenylate (AcAMP) intermediate. In the second half reaction, it can then transfer the acetyl group from AcAMP to the sulfhydryl group of CoA, forming the product AcCoA. This is Acetyl-coenzyme A synthetase from Ralstonia pickettii (strain 12J).